A 548-amino-acid polypeptide reads, in one-letter code: CTP synthase (548 aa).

Residues 1–276 form an amidoligase domain region; that stretch reads MPTELTDYDP…DQYVMEQLGL (276 aa). CTP is bound at residue Ser-25. Position 25 (Ser-25) interacts with UTP. 26–31 is a binding site for ATP; sequence GLGKGI. Tyr-66 contacts L-glutamine. ATP is bound at residue Asp-83. Asp-83 and Glu-151 together coordinate Mg(2+). Residues 158–160, 197–202, and Lys-233 each bind CTP; these read DIE and KTKPTQ. UTP contacts are provided by residues 197–202 and Lys-233; that span reads KTKPTQ. In terms of domain architecture, Glutamine amidotransferase type-1 spans 303-541; the sequence is DIALVGKYAM…VETILETTDT (239 aa). Gly-363 serves as a coordination point for L-glutamine. Cys-390 (nucleophile; for glutamine hydrolysis) is an active-site residue. L-glutamine is bound by residues 391 to 394, Glu-414, and Arg-471; that span reads LGFQ. Catalysis depends on residues His-514 and Glu-516.

It belongs to the CTP synthase family. In terms of assembly, homotetramer.

The catalysed reaction is UTP + L-glutamine + ATP + H2O = CTP + L-glutamate + ADP + phosphate + 2 H(+). It carries out the reaction L-glutamine + H2O = L-glutamate + NH4(+). The enzyme catalyses UTP + NH4(+) + ATP = CTP + ADP + phosphate + 2 H(+). The protein operates within pyrimidine metabolism; CTP biosynthesis via de novo pathway; CTP from UDP: step 2/2. Its activity is regulated as follows. Allosterically activated by GTP, when glutamine is the substrate; GTP has no effect on the reaction when ammonia is the substrate. The allosteric effector GTP functions by stabilizing the protein conformation that binds the tetrahedral intermediate(s) formed during glutamine hydrolysis. Inhibited by the product CTP, via allosteric rather than competitive inhibition. Functionally, catalyzes the ATP-dependent amination of UTP to CTP with either L-glutamine or ammonia as the source of nitrogen. Regulates intracellular CTP levels through interactions with the four ribonucleotide triphosphates. This is CTP synthase from Natronomonas pharaonis (strain ATCC 35678 / DSM 2160 / CIP 103997 / JCM 8858 / NBRC 14720 / NCIMB 2260 / Gabara) (Halobacterium pharaonis).